The sequence spans 149 residues: UPF0208 membrane protein PBPRA2797 (149 aa).

2 helical membrane passes run 41–60 (FATR…QMAF) and 65–87 (ALPQ…LWWL).

The protein belongs to the UPF0208 family.

It localises to the cell inner membrane. This Photobacterium profundum (strain SS9) protein is UPF0208 membrane protein PBPRA2797.